Consider the following 494-residue polypeptide: Amidophosphoribosyltransferase (494 aa).

Residues 1-10 constitute a propeptide that is removed on maturation; sequence MSNYSGLNEE. C11 functions as the Nucleophile in the catalytic mechanism. A Glutamine amidotransferase type-2 domain is found at 11–231; sequence CGVFGIWNHP…AGEYVVITDE (221 aa). 3 residues coordinate Mg(2+): S294, D356, and D357.

The protein in the C-terminal section; belongs to the purine/pyrimidine phosphoribosyltransferase family. The cofactor is Mg(2+).

It catalyses the reaction 5-phospho-beta-D-ribosylamine + L-glutamate + diphosphate = 5-phospho-alpha-D-ribose 1-diphosphate + L-glutamine + H2O. It functions in the pathway purine metabolism; IMP biosynthesis via de novo pathway; N(1)-(5-phospho-D-ribosyl)glycinamide from 5-phospho-alpha-D-ribose 1-diphosphate: step 1/2. Functionally, catalyzes the formation of phosphoribosylamine from phosphoribosylpyrophosphate (PRPP) and glutamine. The protein is Amidophosphoribosyltransferase of Staphylococcus epidermidis (strain ATCC 35984 / DSM 28319 / BCRC 17069 / CCUG 31568 / BM 3577 / RP62A).